The chain runs to 1035 residues: DNA polymerase I B, mitochondrial (1035 aa).

A mitochondrion-targeting transit peptide spans 1 to 42 (MAVAPPLPPAPARLLRRWQGSSPWLSSSFGRTRYFSRPAFAA). Residues 100 to 124 (TNGTTPLRVGNLRHDPSEDIRSSNY) form a disordered region. Over residues 111–120 (LRHDPSEDIR) the composition is skewed to basic and acidic residues. One can recognise a 3'-5' exonuclease domain in the interval 317–478 (FGNGKTCIWV…LYESLKNKLE (162 aa)). A polymerase region spans residues 699–1032 (HAIAALCEVF…VDAKYAKSWY (334 aa)).

This sequence belongs to the DNA polymerase type-A family.

Its subcellular location is the mitochondrion. It catalyses the reaction DNA(n) + a 2'-deoxyribonucleoside 5'-triphosphate = DNA(n+1) + diphosphate. With respect to regulation, not inhibited by aphidicolin. In terms of biological role, in addition to polymerase activity, this DNA polymerase exhibits 5'-3' exonuclease activity. May be required for DNA replication and accumulation in mitochondria. In Oryza sativa subsp. japonica (Rice), this protein is DNA polymerase I B, mitochondrial.